The sequence spans 479 residues: MANFTPVNGSSGNQSVRLVTSSSHNRYETVEMVFIATVTGSLSLVTVVGNILVMLSIKVNRQLQTVNNYFLFSLACADLIIGAFSMNLYTVYIIKGYWPLGAVVCDLWLALDYVVSNASVMNLLIISFDRYFCVTKPLTYPARRTTKMAGLMIAAAWVLSFVLWAPAILFWQFVVGKRTVPDNQCFIQFLSNPAVTFGTAIAAFYLPVVIMTVLYIHISLASRSRVHKHRPEGPKEKKAKTLAFLKSPLMKQSVKKPPPGEAAREELRNGKLEEAPPPALPPPPRPVADKDTSNESSSGSATQNTKERPATELSTTEATTPAMPAPPLQPRALNPASRWSKIQIVTKQTGNECVTAIEIVPATPAGMRPAANVARKFASIARNQVRKKRQMAARERKVTRTIFAILLAFILTWTPYNVMVLVNTFCQSCIPDTVWSIGYWLCYVNSTINPACYALCNATFKKTFRHLLLCQYRNIGTAR.

Over 1–31 the chain is Extracellular; that stretch reads MANFTPVNGSSGNQSVRLVTSSSHNRYETVE. N-linked (GlcNAc...) asparagine glycosylation is found at asparagine 8 and asparagine 13. Residues 32-54 traverse the membrane as a helical segment; the sequence is MVFIATVTGSLSLVTVVGNILVM. Over 55–68 the chain is Cytoplasmic; that stretch reads LSIKVNRQLQTVNN. The helical transmembrane segment at 69-89 threads the bilayer; sequence YFLFSLACADLIIGAFSMNLY. The Extracellular segment spans residues 90-106; it reads TVYIIKGYWPLGAVVCD. A disulfide bridge links cysteine 105 with cysteine 185. A helical transmembrane segment spans residues 107–128; the sequence is LWLALDYVVSNASVMNLLIISF. Over 129-148 the chain is Cytoplasmic; it reads DRYFCVTKPLTYPARRTTKM. Residues 149-171 traverse the membrane as a helical segment; it reads AGLMIAAAWVLSFVLWAPAILFW. Over 172–193 the chain is Extracellular; sequence QFVVGKRTVPDNQCFIQFLSNP. The helical transmembrane segment at 194 to 216 threads the bilayer; that stretch reads AVTFGTAIAAFYLPVVIMTVLYI. Topologically, residues 217–401 are cytoplasmic; the sequence is HISLASRSRV…AARERKVTRT (185 aa). The tract at residues 271–333 is disordered; that stretch reads KLEEAPPPAL…PAPPLQPRAL (63 aa). Residues 275–286 are compositionally biased toward pro residues; sequence APPPALPPPPRP. A compositionally biased stretch (polar residues) spans 294–304; it reads NESSSGSATQN. The helical transmembrane segment at 402–422 threads the bilayer; it reads IFAILLAFILTWTPYNVMVLV. Over 423–436 the chain is Extracellular; the sequence is NTFCQSCIPDTVWS. A helical transmembrane segment spans residues 437 to 456; it reads IGYWLCYVNSTINPACYALC. The Cytoplasmic segment spans residues 457–479; the sequence is NATFKKTFRHLLLCQYRNIGTAR. Residues threonine 459, threonine 463, and threonine 477 each carry the phosphothreonine modification.

It belongs to the G-protein coupled receptor 1 family. Muscarinic acetylcholine receptor subfamily. CHRM4 sub-subfamily.

It localises to the cell membrane. It is found in the postsynaptic cell membrane. Functionally, the muscarinic acetylcholine receptor mediates various cellular responses, including inhibition of adenylate cyclase, breakdown of phosphoinositides and modulation of potassium channels through the action of G proteins. Primary transducing effect is inhibition of adenylate cyclase. This chain is Muscarinic acetylcholine receptor M4 (CHRM4), found in Homo sapiens (Human).